Reading from the N-terminus, the 789-residue chain is Polyribonucleotide nucleotidyltransferase (789 aa).

Residues Asp-494 and Asp-500 each contribute to the Mg(2+) site. A KH domain is found at 561–620 (PRIESIFINKDKIRNVIGSGGKNIREICEKTGARVEIMQDGTVMIYAINNDAVEYAKNMI). The S1 motif domain maps to 630–697 (GKVFDGTVIE…DREYVQLSMR (68 aa)). Residues 709 to 789 (GELYNIRKTN…NEVPRKPRFF (81 aa)) are disordered. Residues 737-749 (SEKKRRGSGRSRR) show a composition bias toward basic residues. Residues 763–780 (NNGFGNGNRSFNDNRNGN) are compositionally biased toward low complexity.

Belongs to the polyribonucleotide nucleotidyltransferase family. Mg(2+) is required as a cofactor.

It localises to the cytoplasm. The catalysed reaction is RNA(n+1) + phosphate = RNA(n) + a ribonucleoside 5'-diphosphate. Its function is as follows. Involved in mRNA degradation. Catalyzes the phosphorolysis of single-stranded polyribonucleotides processively in the 3'- to 5'-direction. This chain is Polyribonucleotide nucleotidyltransferase, found in Ehrlichia ruminantium (strain Gardel).